The chain runs to 510 residues: NAD(P)H-quinone oxidoreductase subunit 2 A, chloroplastic (510 aa).

A run of 13 helical transmembrane segments spans residues 24 to 44 (LLLFHGSFIFPECILIFGLIL), 57 to 77 (IPWLYFISSTSLVMSITALLF), 99 to 119 (IFQFLILLCSTLCIPLSVEYI), 124 to 144 (MAITEFLLFVLTATLGGMFLC), 149 to 169 (LITIFVAPECFSLCSYLLSGY), 183 to 203 (YLLMGGASSSILVHGFSWLYG), 227 to 247 (PGISIALIFITVGIGFKLSPA), 295 to 315 (WHLLLEILAILSMILGNLIAI), 323 to 343 (MLAYSSIGQIGYVIIGIIVGD), 347 to 367 (GYASMITYMLFYISMNLGTFA), 395 to 415 (ALSSALCLLSLGGLPPLAGFF), 418 to 438 (LHLFWCGWQAGLYFLVSIGLL), and 484 to 504 (MIVCVIASTIPGISMNPIIAI).

It belongs to the complex I subunit 2 family. NDH is composed of at least 16 different subunits, 5 of which are encoded in the nucleus.

It localises to the plastid. It is found in the chloroplast thylakoid membrane. The enzyme catalyses a plastoquinone + NADH + (n+1) H(+)(in) = a plastoquinol + NAD(+) + n H(+)(out). It carries out the reaction a plastoquinone + NADPH + (n+1) H(+)(in) = a plastoquinol + NADP(+) + n H(+)(out). Its function is as follows. NDH shuttles electrons from NAD(P)H:plastoquinone, via FMN and iron-sulfur (Fe-S) centers, to quinones in the photosynthetic chain and possibly in a chloroplast respiratory chain. The immediate electron acceptor for the enzyme in this species is believed to be plastoquinone. Couples the redox reaction to proton translocation, and thus conserves the redox energy in a proton gradient. This is NAD(P)H-quinone oxidoreductase subunit 2 A, chloroplastic from Platanus occidentalis (Sycamore).